The primary structure comprises 153 residues: MAPKKDEKPATAEAGAEAPAKAEAKPKAEKAAKKAKKEPSKKAAKEPKGDGEKKDKKKKKSAVETYKLYIYKVLKQVHPDTGISSKAMSIMNSFINDIFEKVATEASKLSRYNKKPTVTSREIQTAVRLVLPGELAKHAVSEGTKAVTKFTSG.

Composition is skewed to basic and acidic residues over residues 1-10 and 20-54; these read MAPKKDEKPA and AKAE…GEKK. Positions 1-60 are disordered; sequence MAPKKDEKPATAEAGAEAPAKAEAKPKAEKAAKKAKKEPSKKAAKEPKGDGEKKDKKKKK. 2 positions are modified to N6-acetyllysine: lysine 41 and lysine 42. Lysine 149 is covalently cross-linked (Glycyl lysine isopeptide (Lys-Gly) (interchain with G-Cter in ubiquitin)).

It belongs to the histone H2B family. The nucleosome is a histone octamer containing two molecules each of H2A, H2B, H3 and H4 assembled in one H3-H4 heterotetramer and two H2A-H2B heterodimers. The octamer wraps approximately 147 bp of DNA. The N-terminus is blocked. Post-translationally, can be acetylated to form H2BK33ac and H2BK34ac. Acetylated mainly on the ubiquitinated form. In terms of processing, monoubiquitinated to form H2BK143ub1; which is increased during the light period and may give a specific tag for epigenetic transcriptional activation.

The protein localises to the nucleus. Its subcellular location is the chromosome. Functionally, core component of nucleosome. Nucleosomes wrap and compact DNA into chromatin, limiting DNA accessibility to the cellular machineries which require DNA as a template. Histones thereby play a central role in transcription regulation, DNA repair, DNA replication and chromosomal stability. DNA accessibility is regulated via a complex set of post-translational modifications of histones, also called histone code, and nucleosome remodeling. This chain is Histone H2B.4, found in Chlamydomonas reinhardtii (Chlamydomonas smithii).